Reading from the N-terminus, the 375-residue chain is Growth/differentiation factor 8 (375 aa).

The first 23 residues, 1 to 23 (MQKLQIFVYIYLFMLLVAGPVDL), serve as a signal peptide directing secretion. Positions 24–266 (NENSEQKENV…VTDTPKRSRR (243 aa)) are excised as a propeptide. N-linked (GlcNAc...) asparagine glycans are attached at residues Asn48 and Asn71. Disulfide bonds link Cys272-Cys282, Cys281-Cys340, Cys309-Cys372, and Cys313-Cys374.

This sequence belongs to the TGF-beta family. Homodimer; disulfide-linked. Interacts with WFIKKN2, leading to inhibit its activity. Interacts with FSTL3. Synthesized as large precursor molecule that undergoes proteolytic cleavage to generate an N-terminal propeptide and a disulfide linked C-terminal dimer, which is the biologically active molecule. The circulating form consists of a latent complex of the C-terminal dimer and other proteins, including its propeptide, which maintain the C-terminal dimer in a latent, inactive state. Ligand activation requires additional cleavage of the prodomain by a tolloid-like metalloproteinase.

The protein localises to the secreted. Functionally, acts specifically as a negative regulator of skeletal muscle growth. The protein is Growth/differentiation factor 8 (MSTN) of Ovis aries (Sheep).